The sequence spans 248 residues: Acetoacetyl-CoA reductase (248 aa).

Residues 14–16 (GGI), R42, and 90–94 (NAGIT) each bind NADP(+). Substrate-binding positions include D96 and 149–152 (QFGQ). Residue Y155 is the Proton acceptor of the active site. NADP(+) is bound at residue 185-188 (PGYT). Substrate contacts are provided by residues 186–187 (GY) and R197.

This sequence belongs to the short-chain dehydrogenases/reductases (SDR) family.

It localises to the cytoplasm. The enzyme catalyses a (3R)-3-hydroxyacyl-CoA + NADP(+) = a 3-oxoacyl-CoA + NADPH + H(+). It functions in the pathway biopolymer metabolism; poly-(R)-3-hydroxybutanoate biosynthesis. The sequence is that of Acetoacetyl-CoA reductase (phaB) from Acinetobacter sp. (strain RA3849).